The primary structure comprises 664 residues: Translation factor GUF1, mitochondrial (664 aa).

In terms of domain architecture, tr-type G spans 63 to 246; sequence SNYRNFSIVA…SIINNIPPPQ (184 aa). GTP contacts are provided by residues 72 to 79, 139 to 143, and 193 to 196; these read AHVDHGKS, DTPGH, and NKID.

This sequence belongs to the TRAFAC class translation factor GTPase superfamily. Classic translation factor GTPase family. LepA subfamily.

It localises to the mitochondrion inner membrane. The enzyme catalyses GTP + H2O = GDP + phosphate + H(+). Its function is as follows. Promotes mitochondrial protein synthesis. May act as a fidelity factor of the translation reaction, by catalyzing a one-codon backward translocation of tRNAs on improperly translocated ribosomes. Binds to mitochondrial ribosomes in a GTP-dependent manner. The sequence is that of Translation factor GUF1, mitochondrial from Clavispora lusitaniae (strain ATCC 42720) (Yeast).